The primary structure comprises 580 residues: Phosphatase and actin regulator 1 (580 aa).

Phosphoserine is present on residues Ser67 and Ser78. Position 104 is a phosphothreonine (Thr104). The short motif at 108 to 129 (RRRSKFANLGRIFKPWKWRKKK) is the Nuclear localization signal element. Residues 138–163 (AALERKISMRQSREELIKRGVLKEIY) form an RPEL 1 repeat. Residues 331 to 351 (EQRVPCSTSYHSSGLHSSDGV) form a disordered region. A compositionally biased stretch (low complexity) spans 337–348 (STSYHSSGLHSS). 3 RPEL repeats span residues 422–447 (DSLA…PRQT), 460–485 (TKLT…KPRN), and 498–523 (RRLT…IRFS). A disordered region spans residues 462–494 (LTRRLSQRPTAEELEQRNILKPRNEQEEQEEKR). A Phosphoserine modification is found at Ser467. Basic and acidic residues predominate over residues 471 to 494 (TAEELEQRNILKPRNEQEEQEEKR). Residue Ser505 is modified to Phosphoserine.

It belongs to the phosphatase and actin regulator family. As to quaternary structure, interacts (via RPEL repeats) with ACTA1 and PPP1CA; ACTA1 and PPP1CA compete for the same binding site. Selectively expressed in brain. High levels are found in the olfactory tubercle, nucleus accumbens core and shell, caudate-putamen, cerebral cortex, hippocampus and piriform cortex. Moderate to high levels in the olfactory bulb, arcuate and ventromedial hypothalamus, subthalamic nucleus, amygdala, lateral septum, habenula and thalamus. Low expression, if any, in substantia nigra pars compacta/pars reticula and globus pallidus (at protein level).

The protein localises to the cytoplasm. It is found in the synapse. Its subcellular location is the nucleus. Its function is as follows. Binds actin monomers (G actin) and plays a role in multiple processes including the regulation of actin cytoskeleton dynamics, actin stress fibers formation, cell motility and survival, formation of tubules by endothelial cells, and regulation of PPP1CA activity. Involved in the regulation of cortical neuron migration and dendrite arborization. This is Phosphatase and actin regulator 1 (Phactr1) from Rattus norvegicus (Rat).